The chain runs to 713 residues: tRNA 5-methylaminomethyl-2-thiouridine biosynthesis bifunctional protein MnmC (713 aa).

The tract at residues 1–300 (MTAEPNKPCQ…MAAILSSATP (300 aa)) is tRNA (mnm(5)s(2)U34)-methyltransferase. An FAD-dependent cmnm(5)s(2)U34 oxidoreductase region spans residues 306 to 713 (IGGGLASAHL…LRKLLKGKAL (408 aa)).

In the N-terminal section; belongs to the methyltransferase superfamily. tRNA (mnm(5)s(2)U34)-methyltransferase family. The protein in the C-terminal section; belongs to the DAO family. Requires FAD as cofactor.

The protein localises to the cytoplasm. It carries out the reaction 5-aminomethyl-2-thiouridine(34) in tRNA + S-adenosyl-L-methionine = 5-methylaminomethyl-2-thiouridine(34) in tRNA + S-adenosyl-L-homocysteine + H(+). In terms of biological role, catalyzes the last two steps in the biosynthesis of 5-methylaminomethyl-2-thiouridine (mnm(5)s(2)U) at the wobble position (U34) in tRNA. Catalyzes the FAD-dependent demodification of cmnm(5)s(2)U34 to nm(5)s(2)U34, followed by the transfer of a methyl group from S-adenosyl-L-methionine to nm(5)s(2)U34, to form mnm(5)s(2)U34. The polypeptide is tRNA 5-methylaminomethyl-2-thiouridine biosynthesis bifunctional protein MnmC (Shewanella baltica (strain OS155 / ATCC BAA-1091)).